A 397-amino-acid chain; its full sequence is MSWLFPLTKSASSSAAGSPGGLTSLQQQKQRLIESLRNSHSSIAEIQKDVEYRLPFTINNLTININILLPPQFPQEKPVISVYPPIRHHLMDKQGVYVTSPLVNNFTMHSDLGKIIQSLLDEFWKNPPVLAPTSTAFPYLYSNPSGMSPYASQGFPFLPPYPPQEANRSITSLSVADTVSSSTTSHTTAKPAAPSFGVLSNLPLPIPTVDASIPTSQNGFGYKMPDVPDAFPELSELSVSQLTDMNEQEEVLLEQFLTLPQLKQIITDKDDLVKSIEELARKNLLLEPSLEAKRQTVLDKYELLTQMKSTFEKKMQRQHELSESCSASALQARLKVAAHEAEEESDNIAEDFLEGKMEIDDFLSSFMEKRTICHCRRAKEEKLQQAIAMHSQFHAPL.

The tract at residues 1–22 (MSWLFPLTKSASSSAAGSPGGL) is disordered. Ser18 carries the phosphoserine modification. Residues 308 to 397 (KSTFEKKMQR…AMHSQFHAPL (90 aa)) form the VPS37 C-terminal domain.

This sequence belongs to the VPS37 family. In terms of assembly, component of the ESCRT-I complex (endosomal sorting complex required for transport I) which consists of TSG101, VPS28, a VPS37 protein (VPS37A to -D) and MVB12A or MVB12B in a 1:1:1:1 stoichiometry. Interacts with TSG101, VPS28 and HGS. Component of an ESCRT-I complex (endosomal sorting complex required for transport I) which consists of TSG101, VPS28, VPS37A and UBAP1 in a 1:1:1:1 stoichiometry. As to expression, widely expressed. Examined tissues include heart, brain, placenta, liver, skeletal muscle, kidney and pancreas. More abundant in liver. Strongly decreased or undetected in hepatomas.

The protein resides in the late endosome membrane. It is found in the nucleus. Its function is as follows. Component of the ESCRT-I complex, a regulator of vesicular trafficking process. Required for the sorting of endocytic ubiquitinated cargos into multivesicular bodies. May be involved in cell growth and differentiation. The sequence is that of Vacuolar protein sorting-associated protein 37A (VPS37A) from Homo sapiens (Human).